Here is a 226-residue protein sequence, read N- to C-terminus: N-(5'-phosphoribosyl)anthranilate isomerase (226 aa).

Belongs to the TrpF family.

It catalyses the reaction N-(5-phospho-beta-D-ribosyl)anthranilate = 1-(2-carboxyphenylamino)-1-deoxy-D-ribulose 5-phosphate. It participates in amino-acid biosynthesis; L-tryptophan biosynthesis; L-tryptophan from chorismate: step 3/5. The chain is N-(5'-phosphoribosyl)anthranilate isomerase (TRP1) from Candida albicans (strain SC5314 / ATCC MYA-2876) (Yeast).